Consider the following 501-residue polypeptide: Cyclin-dependent kinase 19 (501 aa).

The residue at position 1 (Met1) is an N-acetylmethionine. In terms of domain architecture, Protein kinase spans 21–335 (EYEGCKVGRG…SEQALQDPYF (315 aa)). Residues 27-35 (VGRGTYGHV) and Lys52 contribute to the ATP site. The active-site Proton acceptor is Asp151. The tract at residues 362–501 (DEPEEKGDKN…YHSSHQTHRY (140 aa)) is disordered. Over residues 371 to 392 (NQPQQQNPHQQPAAPAQQTAAP) the composition is skewed to low complexity. The span at 408 to 421 (TAGGATAGGGGAGA) shows a compositional bias: gly residues. A Phosphoserine modification is found at Ser449. Residues 467 to 495 (YQSSVQGSSQSQSTLGYSSSQQSTQYHSS) are compositionally biased toward low complexity.

Belongs to the protein kinase superfamily. CMGC Ser/Thr protein kinase family. CDC2/CDKX subfamily.

It localises to the cytoplasm. Its subcellular location is the perinuclear region. It is found in the nucleus. The catalysed reaction is L-seryl-[protein] + ATP = O-phospho-L-seryl-[protein] + ADP + H(+). The enzyme catalyses L-threonyl-[protein] + ATP = O-phospho-L-threonyl-[protein] + ADP + H(+). This Mus musculus (Mouse) protein is Cyclin-dependent kinase 19 (Cdk19).